Consider the following 313-residue polypeptide: Porphobilinogen deaminase (313 aa).

C242 is modified (S-(dipyrrolylmethanemethyl)cysteine).

This sequence belongs to the HMBS family. Monomer. It depends on dipyrromethane as a cofactor.

The catalysed reaction is 4 porphobilinogen + H2O = hydroxymethylbilane + 4 NH4(+). Its pathway is porphyrin-containing compound metabolism; protoporphyrin-IX biosynthesis; coproporphyrinogen-III from 5-aminolevulinate: step 2/4. Its function is as follows. Tetrapolymerization of the monopyrrole PBG into the hydroxymethylbilane pre-uroporphyrinogen in several discrete steps. The protein is Porphobilinogen deaminase of Klebsiella pneumoniae (strain 342).